We begin with the raw amino-acid sequence, 276 residues long: Chymotrypsin (276 aa).

The signal sequence occupies residues 1–16; that stretch reads MKVALVVLALFGVSLA. A propeptide spans 17 to 45 (activation peptide); the sequence is ASIDNIEIPPSKNIYVEPINQPEVDPSLE. A Peptidase S1 domain is found at 46–272; sequence IVNGQEVVPH…YLNWLQTHSE (227 aa). The cysteines at positions 74 and 90 are disulfide-linked. Catalysis depends on charge relay system residues histidine 89 and aspartate 135. N-linked (GlcNAc...) asparagine glycosylation is found at asparagine 144 and asparagine 193. 2 cysteine pairs are disulfide-bonded: cysteine 202–cysteine 215 and cysteine 225–cysteine 250. The active-site Charge relay system is serine 229.

The protein belongs to the peptidase S1 family. As to expression, expressed in larval carcasses and gut, and adult gut.

The protein resides in the secreted. The protein localises to the extracellular space. It catalyses the reaction Preferential cleavage: Tyr-|-Xaa, Trp-|-Xaa, Phe-|-Xaa, Leu-|-Xaa.. In terms of biological role, serine protease with chymotryptic and collagenolytic activities. The polypeptide is Chymotrypsin (Phaedon cochleariae (Mustard beetle)).